The primary structure comprises 352 residues: Protein-glutamate methylesterase/protein-glutamine glutaminase (352 aa).

The Response regulatory domain occupies 4–121; the sequence is RVLIVDDSAT…YDGIDEIQKE (118 aa). A 4-aspartylphosphate modification is found at D55. The CheB-type methylesterase domain occupies 159 to 351; it reads AQTTNKLIAI…VKIASLLSER (193 aa). Active-site residues include S171, H197, and D293.

This sequence belongs to the CheB family. Post-translationally, phosphorylated by CheA. Phosphorylation of the N-terminal regulatory domain activates the methylesterase activity.

The protein resides in the cytoplasm. It catalyses the reaction [protein]-L-glutamate 5-O-methyl ester + H2O = L-glutamyl-[protein] + methanol + H(+). The enzyme catalyses L-glutaminyl-[protein] + H2O = L-glutamyl-[protein] + NH4(+). In terms of biological role, involved in chemotaxis. Part of a chemotaxis signal transduction system that modulates chemotaxis in response to various stimuli. Catalyzes the demethylation of specific methylglutamate residues introduced into the chemoreceptors (methyl-accepting chemotaxis proteins or MCP) by CheR. Also mediates the irreversible deamidation of specific glutamine residues to glutamic acid. The protein is Protein-glutamate methylesterase/protein-glutamine glutaminase of Sulfurimonas denitrificans (strain ATCC 33889 / DSM 1251) (Thiomicrospira denitrificans (strain ATCC 33889 / DSM 1251)).